The following is a 61-amino-acid chain: MTYAILIIVSLLLISDRISNVVDKYCSENPLDCNEHCLKTKNQIGICHGANGNEKCSCMES.

A signal peptide spans 1–19; the sequence is MTYAILIIVSLLLISDRIS. The propeptide occupies 20 to 22; that stretch reads NVV. 3 cysteine pairs are disulfide-bonded: cysteine 26–cysteine 47, cysteine 33–cysteine 56, and cysteine 37–cysteine 58.

This sequence belongs to the invertebrate defensin family. Expressed by the venom gland.

The protein resides in the secreted. Its function is as follows. Antibacterial protein. This chain is Defensin-like peptide TXKs2, found in Olivierus martensii (Manchurian scorpion).